A 134-amino-acid chain; its full sequence is UPF0412 protein YaaI (134 aa).

Positions 1 to 23 are cleaved as a signal peptide; the sequence is MKSVFTLSASLAISLMLCCTAQA.

It belongs to the UPF0412 family.

The polypeptide is UPF0412 protein YaaI (Escherichia coli O17:K52:H18 (strain UMN026 / ExPEC)).